The chain runs to 838 residues: Alpha-glucan phosphorylase, H isozyme (838 aa).

Residues 1–21 form a disordered region; the sequence is MEGGAKSNDVSAAPIAQPLSE. Lys684 bears the N6-(pyridoxal phosphate)lysine mark.

Belongs to the glycogen phosphorylase family. It depends on pyridoxal 5'-phosphate as a cofactor.

The protein resides in the cytoplasm. The enzyme catalyses [(1-&gt;4)-alpha-D-glucosyl](n) + phosphate = [(1-&gt;4)-alpha-D-glucosyl](n-1) + alpha-D-glucose 1-phosphate. Functionally, phosphorylase is an important allosteric enzyme in carbohydrate metabolism. Enzymes from different sources differ in their regulatory mechanisms and in their natural substrates. However, all known phosphorylases share catalytic and structural properties. This is Alpha-glucan phosphorylase, H isozyme from Solanum tuberosum (Potato).